A 371-amino-acid polypeptide reads, in one-letter code: N-acetyldiaminopimelate deacetylase (371 aa).

Asp68 is an active-site residue. The active-site Proton acceptor is Glu127.

The protein belongs to the peptidase M20A family. N-acetyldiaminopimelate deacetylase subfamily.

The catalysed reaction is N-acetyl-(2S,6S)-2,6-diaminopimelate + H2O = (2S,6S)-2,6-diaminopimelate + acetate. Its pathway is amino-acid biosynthesis; L-lysine biosynthesis via DAP pathway; LL-2,6-diaminopimelate from (S)-tetrahydrodipicolinate (acetylase route): step 3/3. In terms of biological role, catalyzes the conversion of N-acetyl-diaminopimelate to diaminopimelate and acetate. This is N-acetyldiaminopimelate deacetylase from Oceanobacillus iheyensis (strain DSM 14371 / CIP 107618 / JCM 11309 / KCTC 3954 / HTE831).